The primary structure comprises 241 residues: Ubiquinone biosynthesis O-methyltransferase (241 aa).

S-adenosyl-L-methionine-binding residues include Arg42, Gly62, Asp83, and Met127.

This sequence belongs to the methyltransferase superfamily. UbiG/COQ3 family.

The enzyme catalyses a 3-demethylubiquinol + S-adenosyl-L-methionine = a ubiquinol + S-adenosyl-L-homocysteine + H(+). It catalyses the reaction a 3-(all-trans-polyprenyl)benzene-1,2-diol + S-adenosyl-L-methionine = a 2-methoxy-6-(all-trans-polyprenyl)phenol + S-adenosyl-L-homocysteine + H(+). Its pathway is cofactor biosynthesis; ubiquinone biosynthesis. In terms of biological role, O-methyltransferase that catalyzes the 2 O-methylation steps in the ubiquinone biosynthetic pathway. This Pectobacterium atrosepticum (strain SCRI 1043 / ATCC BAA-672) (Erwinia carotovora subsp. atroseptica) protein is Ubiquinone biosynthesis O-methyltransferase.